The sequence spans 187 residues: Bifunctional protein PyrR (187 aa).

Positions Val109 to Ser121 match the PRPP-binding motif.

The protein belongs to the purine/pyrimidine phosphoribosyltransferase family. PyrR subfamily.

It carries out the reaction UMP + diphosphate = 5-phospho-alpha-D-ribose 1-diphosphate + uracil. In terms of biological role, regulates the transcription of the pyrimidine nucleotide (pyr) operon in response to exogenous pyrimidines. Functionally, also displays a weak uracil phosphoribosyltransferase activity which is not physiologically significant. The chain is Bifunctional protein PyrR from Mycobacterium ulcerans (strain Agy99).